A 242-amino-acid chain; its full sequence is ATP synthase subunit 4, mitochondrial (242 aa).

A mitochondrion-targeting transit peptide spans 1–35 (MSFRALTMRSAVARTALNNTIRSARVATPYLGIRH).

The protein belongs to the eukaryotic ATPase B chain family. F-type ATPases have 2 components, CF(1) - the catalytic core - and CF(0) - the membrane proton channel. In yeast, the dimeric form of ATP synthase consists of 17 polypeptides: alpha, beta, gamma, delta, epsilon, 4 (B), 5 (OSCP), 6 (A), 8, 9 (C), d, E (Tim11), f, g, h, i/j and k.

Its subcellular location is the mitochondrion. It localises to the mitochondrion inner membrane. Functionally, mitochondrial membrane ATP synthase (F(1)F(0) ATP synthase or Complex V) produces ATP from ADP in the presence of a proton gradient across the membrane which is generated by electron transport complexes of the respiratory chain. F-type ATPases consist of two structural domains, F(1) - containing the extramembraneous catalytic core, and F(0) - containing the membrane proton channel, linked together by a central stalk and a peripheral stalk. During catalysis, ATP synthesis in the catalytic domain of F(1) is coupled via a rotary mechanism of the central stalk subunits to proton translocation. Part of the complex F(0) domain and the peripheric stalk, which acts as a stator to hold the catalytic alpha(3)beta(3) subcomplex and subunit a/ATP6 static relative to the rotary elements. This Candida glabrata (strain ATCC 2001 / BCRC 20586 / JCM 3761 / NBRC 0622 / NRRL Y-65 / CBS 138) (Yeast) protein is ATP synthase subunit 4, mitochondrial (ATP4).